We begin with the raw amino-acid sequence, 125 residues long: Large ribosomal subunit protein bL17 (125 aa).

This sequence belongs to the bacterial ribosomal protein bL17 family. In terms of assembly, part of the 50S ribosomal subunit. Contacts protein L32.

The sequence is that of Large ribosomal subunit protein bL17 from Acinetobacter baumannii (strain AB0057).